The sequence spans 126 residues: MDVSQPRIQIQVHTKYVEEQSNPELARYIFAYIITIKNHSSESVQLLSRRWLITDANGKQISVEGDGVVGQQPFIDAGDEYTYSSGTALDTPVGVMQGQYIMHDAQGKEFVVEIEPFRLAVPNILN.

Residues 2-126 (DVSQPRIQIQ…FRLAVPNILN (125 aa)) enclose the ApaG domain.

The protein is Protein ApaG of Vibrio vulnificus (strain CMCP6).